Reading from the N-terminus, the 128-residue chain is Aspartate 1-decarboxylase (128 aa).

The active-site Schiff-base intermediate with substrate; via pyruvic acid is serine 25. Serine 25 carries the post-translational modification Pyruvic acid (Ser). A substrate-binding site is contributed by threonine 57. Tyrosine 58 acts as the Proton donor in catalysis. 73–75 is a substrate binding site; the sequence is GAA.

This sequence belongs to the PanD family. Heterooctamer of four alpha and four beta subunits. Pyruvate serves as cofactor. Post-translationally, is synthesized initially as an inactive proenzyme, which is activated by self-cleavage at a specific serine bond to produce a beta-subunit with a hydroxyl group at its C-terminus and an alpha-subunit with a pyruvoyl group at its N-terminus.

It localises to the cytoplasm. The enzyme catalyses L-aspartate + H(+) = beta-alanine + CO2. It functions in the pathway cofactor biosynthesis; (R)-pantothenate biosynthesis; beta-alanine from L-aspartate: step 1/1. Functionally, catalyzes the pyruvoyl-dependent decarboxylation of aspartate to produce beta-alanine. This Chlorobaculum parvum (strain DSM 263 / NCIMB 8327) (Chlorobium vibrioforme subsp. thiosulfatophilum) protein is Aspartate 1-decarboxylase.